A 369-amino-acid polypeptide reads, in one-letter code: Transposase for insertion sequence element IS1201 (369 aa).

It belongs to the transposase mutator family.

Functionally, required for the transposition of the insertion element. This is Transposase for insertion sequence element IS1201 from Lactobacillus helveticus (Lactobacillus suntoryeus).